Here is a 159-residue protein sequence, read N- to C-terminus: Putative transcriptional regulatory protein rrnAC0199 (159 aa).

It belongs to the Tfx family.

Putative transcriptional regulator. The polypeptide is Putative transcriptional regulatory protein rrnAC0199 (Haloarcula marismortui (strain ATCC 43049 / DSM 3752 / JCM 8966 / VKM B-1809) (Halobacterium marismortui)).